The primary structure comprises 1921 residues: Putative callose synthase 6 (1921 aa).

The tract at residues 1–23 (MEASSSGTAELPRSLSRRAPSRA) is disordered. The Cytoplasmic segment spans residues 1 to 492 (MEASSSGTAE…FWNLFRDFDR (492 aa)). The helical transmembrane segment at 493–513 (MWIFLVMAFQAMVIVGWHGSG) threads the bilayer. Topologically, residues 514–526 (SLGDIFDKDVFKT) are extracellular. Residues 527–547 (VLTIFITSAYLTLLQAALDII) form a helical membrane-spanning segment. The Cytoplasmic portion of the chain corresponds to 548–560 (LNFNAWKNFKFSQ). The helical transmembrane segment at 561–581 (ILRYLLKFAVAFMWAVLLPIA) threads the bilayer. At 582–611 (YSKSVQRPTGVVKFFSTWTGDWKDQSFYTY) the chain is on the extracellular side. A helical membrane pass occupies residues 612-632 (AVSFYVLPNILAALLFLVPPF). Over 633 to 674 (RRAMECSDMRPIKVIMWWAQPKLYVGRGMHEDMFSLFKYTTF) the chain is Cytoplasmic. A helical membrane pass occupies residues 675–695 (WIMLLISKLAFNYYVEILPLI). The Extracellular portion of the chain corresponds to 696 to 721 (TPTKMIMNLHIGHYQWHEFFPHATNN). A helical membrane pass occupies residues 722–742 (IGVVIAIWAPIVLVYLMDTQI). The Cytoplasmic segment spans residues 743 to 1484 (WYAIFSTLFG…FDFYRMLSFY (742 aa)). A helical membrane pass occupies residues 1485-1505 (FTTIGFYFSSMLTVLTVYAFL). Topologically, residues 1506–1540 (YGRMYMVMSGLEKEILRLASPNQLEALEQALATQS) are extracellular. A helical membrane pass occupies residues 1541–1561 (IFQLGFLMVLPMVMEIGLEHG). Over 1562–1564 (FRS) the chain is Cytoplasmic. A helical membrane pass occupies residues 1565–1585 (AIVDFFIMQLQLASVFFTFQL). Residues 1586–1628 (GTKSHYYGRTILHGGSKYRPTGRGFVVFHAKFAENYRLYSRSH) lie on the Extracellular side of the membrane. Residues 1629–1649 (FVKGLELLLLLVVYQIYGHSY) form a helical membrane-spanning segment. The Cytoplasmic portion of the chain corresponds to 1650-1655 (RSSNLY). A helical membrane pass occupies residues 1656–1676 (LYITVSMWFMVGSWLFAPFIF). Residues 1677–1730 (NPSGFEWQKTVDDWTDWKRWLGDRGGIGIPVEKSWESWWNVEQEHLKHTSIRGR) are Extracellular-facing. Residues 1731–1751 (ILEITLALRFFIYQYGIVYQL) form a helical membrane-spanning segment. Topologically, residues 1752 to 1759 (NISQRSKS) are cytoplasmic. The chain crosses the membrane as a helical span at residues 1760-1780 (FLVYGLSWVVLLTSLLVLKMV). The Extracellular portion of the chain corresponds to 1781-1796 (SMGRRRFGTDFQLMFR). The helical transmembrane segment at 1797 to 1817 (ILKALLFLGFLSVMTILFVVF) threads the bilayer. Topologically, residues 1818-1823 (KLTLTD) are cytoplasmic. A helical transmembrane segment spans residues 1824 to 1844 (LSASVLAFLPTGWAILLIGQV). Over 1845–1867 (LRSPIKALGVWDSVKELGRAYEN) the chain is Extracellular. The chain crosses the membrane as a helical span at residues 1868–1888 (IMGLVIFAPIAVLSWFPIVSE). Residues 1889–1921 (FQARLLFNQAFSRGLQISMILAGRKDKATSSHK) lie on the Cytoplasmic side of the membrane.

This sequence belongs to the glycosyltransferase 48 family.

It is found in the cell membrane. The catalysed reaction is [(1-&gt;3)-beta-D-glucosyl](n) + UDP-alpha-D-glucose = [(1-&gt;3)-beta-D-glucosyl](n+1) + UDP + H(+). In terms of biological role, probably involved in callose synthesis, but not required for callose formation after wounding or pathogen attack. During plant growth and development, callose is found as a transitory component of the cell plate in dividing cells, is a major component of pollen mother cell walls and pollen tubes, and is found as a structural component of plasmodesmatal canals. The sequence is that of Putative callose synthase 6 (CALS6) from Arabidopsis thaliana (Mouse-ear cress).